We begin with the raw amino-acid sequence, 241 residues long: Copper transport protein CTR3 (241 aa).

Residues 1–41 (MNMGGSSSTAAKKATCKISMLWNWYTIDTCFIARSWRNDTK) are Lumenal-facing. A helical membrane pass occupies residues 42–62 (GKFAGSCIGCFALVVVAQWLT). Over 63–159 (RFSRQFDVEL…SCCTLITPVD (97 aa)) the chain is Cytoplasmic. The helical transmembrane segment at 160 to 180 (LYPTFLDHMIRVTIFVLQWGL) threads the bilayer. The Lumenal segment spans residues 181-182 (SY). A helical transmembrane segment spans residues 183 to 203 (IIMLLFMYYNGYIIISCLIGA). Residues 204-241 (IVGRFIFCYEPLGSLGANGSAQGTVSYDKESDDRKCCL) are Cytoplasmic-facing.

This sequence belongs to the copper transporter (Ctr) (TC 1.A.56) family. SLC31A subfamily.

It localises to the cytoplasmic vesicle membrane. Required for high affinity copper (probably reduced Cu I) transport into the cell. This is Copper transport protein CTR3 (CTR3) from Saccharomyces cerevisiae (strain ATCC 204508 / S288c) (Baker's yeast).